The sequence spans 488 residues: Capsid protein (488 aa).

The disordered stretch occupies residues 79–142; it reads ETSEDESDSG…TQPKTIPGQK (64 aa). Residues 80 to 93 are compositionally biased toward acidic residues; sequence TSEDESDSGEEPEF. The segment covering 94–130 has biased composition (basic and acidic residues); it reads EQVRMDRTGGTEIPKKEDGAEPSRYNERKRKTTEDRY. The short motif at 121–124 is the Nuclear localization signal element; sequence RKRK. The segment at 411–428 adopts a CCHC-type; degenerate zinc-finger fold; it reads CRCWISNIEGHYANECPN. The disordered stretch occupies residues 464–488; the sequence is YKEEEEETSTEESDGSSTSEDSDSD. Over residues 465 to 488 the composition is skewed to acidic residues; sequence KEEEEETSTEESDGSSTSEDSDSD.

Belongs to the caulimoviridae capsid protein family. In terms of assembly, interacts (via nuclear localization signal) with host importin alpha.

The protein resides in the virion. It is found in the host nucleus. Its function is as follows. Self assembles to form an icosahedral capsid, about 50 nm in diameter, nm, composed of 420 subunits of the viral capsid protein. The capsid encapsulates the genomic dsDNA. Following virus entry into host cell, provides nuclear import of the viral genome. Virus particles do not enter the nucleus, but dock at the nuclear membrane through the interaction with host importins. This is Capsid protein from Arabidopsis thaliana (Mouse-ear cress).